Reading from the N-terminus, the 1197-residue chain is DNA-directed RNA polymerase subunit beta (1197 aa).

It belongs to the RNA polymerase beta chain family. In terms of assembly, the RNAP catalytic core consists of 2 alpha, 1 beta, 1 beta' and 1 omega subunit. When a sigma factor is associated with the core the holoenzyme is formed, which can initiate transcription.

It carries out the reaction RNA(n) + a ribonucleoside 5'-triphosphate = RNA(n+1) + diphosphate. In terms of biological role, DNA-dependent RNA polymerase catalyzes the transcription of DNA into RNA using the four ribonucleoside triphosphates as substrates. In Streptococcus pyogenes serotype M12 (strain MGAS9429), this protein is DNA-directed RNA polymerase subunit beta.